The primary structure comprises 121 residues: uncharacterized protein (121 aa).

Positions 9–77 (KPIYLQIADQ…RGQGTFIAEK (69 aa)) constitute an HTH gntR-type domain. The segment at residues 37–56 (VREMAIQTKVNPNTIQRTYS) is a DNA-binding region (H-T-H motif).

This is an uncharacterized protein from Bacillus subtilis (strain 168).